We begin with the raw amino-acid sequence, 398 residues long: Ornithine aminotransferase (398 aa).

Lysine 256 carries the post-translational modification N6-(pyridoxal phosphate)lysine.

This sequence belongs to the class-III pyridoxal-phosphate-dependent aminotransferase family. OAT subfamily. Pyridoxal 5'-phosphate is required as a cofactor.

It is found in the cytoplasm. The catalysed reaction is a 2-oxocarboxylate + L-ornithine = L-glutamate 5-semialdehyde + an L-alpha-amino acid. It participates in amino-acid biosynthesis; L-proline biosynthesis; L-glutamate 5-semialdehyde from L-ornithine: step 1/1. In terms of biological role, catalyzes the interconversion of ornithine to glutamate semialdehyde. This chain is Ornithine aminotransferase, found in Halalkalibacterium halodurans (strain ATCC BAA-125 / DSM 18197 / FERM 7344 / JCM 9153 / C-125) (Bacillus halodurans).